The primary structure comprises 575 residues: MSNLLWKSLVVSPAVLGATLLVSSAAIAATNATTELSVTETVVPTELAQQPEIVAQAAPITEDTKVIDQVNRYSNEGKGNAQSQVTSVSQFSDVQPTDWAFQALQSLVERYGCIAGYPNGTYRGNRALTRYEFAAGLNACLDRVNELIATATADLVTKQDLATLQRLQEEFSAELATLRGRVDALEARTAELEANQFSTTTKLVGEAIFAVTDAFGENTGDANNTVFQNRVRLGLQTSFTGRDVLTTRLAAGNATGFDFRDNNNNSIGASGQGLQTFQVGSTGNNNVEIDRLTYEAPFGPAQVYLAASGGRHSHYAAVNNPYFFDKTDGGNGALSTFSSENPIYRIGGGAGIAFNVPFGQGGSILRPSSFTVGYLASDANNPGPNQGLFNGDYAALGQLNFSVGDRLALAATYVHGYHGASGSALFDSGANGAIVGTSLANNNSFLNASSSNSYGLSAAFRPSDKLSVSGFVSYSDVTGFGANDDREVWSYGIGVALPDFGKRGNVLGIFAGAQPYARGVQAGANEVPYQVEGFYKYRVSDNISITPGVIWVTNPGQNSNADDAIIGTLRTTFTF.

The N-terminal stretch at methionine 1–alanine 28 is a signal peptide. An SLH domain is found at serine 87–alanine 151. The stretch at lysine 158 to glutamine 196 forms a coiled coil.

It belongs to the OprB family.

This is an uncharacterized protein from Nostoc sp. (strain PCC 7120 / SAG 25.82 / UTEX 2576).